The following is a 432-amino-acid chain: Crenactin (432 aa).

ATP is bound by residues 20–24, 182–184, 235–239, 354–358, and Gln399; these read TSYVK, GGH, EVVKR, and GAFSW.

This sequence belongs to the actin family. In terms of assembly, monomer. The crenactin monomers polymerize into right-handed helical filaments, with 8 subunits per complete turn of the helix. Forms single-stranded filaments under high salt concentrations and double-stranded filaments under low salt concentrations. Interacts with arcadin-1 and arcadin-2.

It is found in the cytoplasm. The protein resides in the cytoskeleton. It carries out the reaction ATP + H2O = ADP + phosphate + H(+). Its activity is regulated as follows. Crenactin polymerization is inhibited by interaction with arcadin-2. Also significantly inhibited by elevated antibiotic A22 concentrations. Functionally, forms the backbone of an actin-like archaeal cytoskeleton, which is involved in cell shape determination. Has ATPase activity. Shows highest activity towards ATP or GTP as nucleotide, and only residual activity on UTP, CTP and dNTPs. The protein is Crenactin of Pyrobaculum calidifontis (strain DSM 21063 / JCM 11548 / VA1).